Here is a 251-residue protein sequence, read N- to C-terminus: Segregation and condensation protein A (251 aa).

Belongs to the ScpA family. In terms of assembly, component of a cohesin-like complex composed of ScpA, ScpB and the Smc homodimer, in which ScpA and ScpB bind to the head domain of Smc. The presence of the three proteins is required for the association of the complex with DNA.

It localises to the cytoplasm. Its function is as follows. Participates in chromosomal partition during cell division. May act via the formation of a condensin-like complex containing Smc and ScpB that pull DNA away from mid-cell into both cell halves. This is Segregation and condensation protein A from Clostridium botulinum (strain Alaska E43 / Type E3).